The chain runs to 274 residues: Triosephosphate isomerase (274 aa).

31-33 (NWK) serves as a coordination point for substrate. H118 functions as the Electrophile in the catalytic mechanism. The Proton acceptor role is filled by E188. Residues G194, S234, and 255–256 (GG) each bind substrate.

Belongs to the triosephosphate isomerase family. As to quaternary structure, homodimer.

It localises to the cytoplasm. It carries out the reaction D-glyceraldehyde 3-phosphate = dihydroxyacetone phosphate. It participates in carbohydrate biosynthesis; gluconeogenesis. Its pathway is carbohydrate degradation; glycolysis; D-glyceraldehyde 3-phosphate from glycerone phosphate: step 1/1. Functionally, involved in the gluconeogenesis. Catalyzes stereospecifically the conversion of dihydroxyacetone phosphate (DHAP) to D-glyceraldehyde-3-phosphate (G3P). In Chlamydia trachomatis serovar D (strain ATCC VR-885 / DSM 19411 / UW-3/Cx), this protein is Triosephosphate isomerase.